The sequence spans 1036 residues: KAT8 regulatory NSL complex subunit 1 (1036 aa).

Lysine 104 carries the post-translational modification N6-acetyllysine. Disordered stretches follow at residues 145-211 and 226-257; these read GQTA…CTLP and NSTA…SSSN. Residues 226 to 244 are compositionally biased toward polar residues; sequence NSTANKSSVNSMDQPALQG. Residues 245–256 show a composition bias toward low complexity; sequence SSRLSPSTDSSS. A Phosphoserine modification is found at serine 249. Lysine 262 participates in a covalent cross-link: Glycyl lysine isopeptide (Lys-Gly) (interchain with G-Cter in SUMO2). Position 268 is a phosphoserine (serine 268). The stretch at 285-312 forms a coiled coil; sequence TALLRRQADIEIRARRLQKRLQVVQAKQ. Lysine 331 participates in a covalent cross-link: Glycyl lysine isopeptide (Lys-Gly) (interchain with G-Cter in SUMO2). Disordered stretches follow at residues 399–423 and 739–787; these read DSDV…RADP and SPSY…RRRG. The span at 759–772 shows a compositional bias: low complexity; the sequence is STSSDTSTPTSSGS. Positions 781-813 are required for activation of KAT8 histone acetyltransferase activity; it reads PVRRRRGESSFDINNIVIPMSVAATTRVEKLQY. Positions 815–966 constitute a PEHE domain; sequence EILTPSWREV…GLDEQSVQPW (152 aa). Positions 841-859 are interaction with KAT8 HAT domain; sequence EDLSDAAFAALHAKCEEME. Residues 869–931 are disordered; that stretch reads VPPQRRGSRS…SPISPELHSA (63 aa). The span at 886–896 shows a compositional bias: polar residues; it reads TTPQLGSANPS. Over residues 906-919 the composition is skewed to low complexity; the sequence is SSSHSLSEFSHGQS. 2 positions are modified to phosphoserine: serine 922 and serine 925. Threonine 934 carries the post-translational modification Phosphothreonine. Phosphoserine is present on serine 976. Positions 989 to 1020 are disordered; it reads DTAARCTRRTSGSKTGREAEVAPTSPPVVPLK.

In terms of assembly, component of the NSL complex at least composed of MOF/KAT8, KANSL1, KANSL2, KANSL3, MCRS1, PHF20, OGT1/OGT, WDR5 and HCFC1. Interacts (via PEHE domain) with KAT8 (via HAT domain); the interaction is direct. Component of some MLL1/MLL complex, at least composed of the core components KMT2A/MLL1, ASH2L, HCFC1, WDR5 and RBBP5, as well as the facultative components BACC1, CHD8, E2F6, HSP70, INO80C, KANSL1, LAS1L, MAX, MCRS1, MGA, KAT8/MOF, PELP1, PHF20, PRP31, RING2, RUVB1/TIP49A, RUVB2/TIP49B, SENP3, TAF1, TAF4, TAF6, TAF7, TAF9 and TEX10.

The protein resides in the nucleus. Its subcellular location is the chromosome. It is found in the centromere. The protein localises to the kinetochore. It localises to the mitochondrion. The protein resides in the cytoplasm. Its subcellular location is the cytoskeleton. It is found in the spindle pole. In terms of biological role, non-catalytic component of the NSL histone acetyltransferase complex, a multiprotein complex that mediates histone H4 acetylation at 'Lys-5'- and 'Lys-8' (H4K5ac and H4K8ac) at transcription start sites and promotes transcription initiation. The NSL complex also acts as a regulator of gene expression in mitochondria. In addition to its role in transcription, KANSL1 also plays an essential role in spindle assembly during mitosis. Associates with microtubule ends and contributes to microtubule stability. This Mus musculus (Mouse) protein is KAT8 regulatory NSL complex subunit 1 (Kansl1).